The following is a 455-amino-acid chain: Probable glycine dehydrogenase (decarboxylating) subunit 1 (455 aa).

The protein belongs to the GcvP family. N-terminal subunit subfamily. In terms of assembly, the glycine cleavage system is composed of four proteins: P, T, L and H. In this organism, the P 'protein' is a heterodimer of two subunits.

It carries out the reaction N(6)-[(R)-lipoyl]-L-lysyl-[glycine-cleavage complex H protein] + glycine + H(+) = N(6)-[(R)-S(8)-aminomethyldihydrolipoyl]-L-lysyl-[glycine-cleavage complex H protein] + CO2. The glycine cleavage system catalyzes the degradation of glycine. The P protein binds the alpha-amino group of glycine through its pyridoxal phosphate cofactor; CO(2) is released and the remaining methylamine moiety is then transferred to the lipoamide cofactor of the H protein. The sequence is that of Probable glycine dehydrogenase (decarboxylating) subunit 1 from Francisella tularensis subsp. holarctica (strain LVS).